The sequence spans 460 residues: Dynactin subunit 4 (460 aa).

Ala2 carries the post-translational modification N-acetylalanine. Residues 152–172 (QQLAQKEKVERDRKKLARRRN) are a coiled coil. Ser196 is subject to Phosphoserine. Residue Lys215 forms a Glycyl lysine isopeptide (Lys-Gly) (interchain with G-Cter in SUMO2) linkage. Residue Thr407 is modified to Phosphothreonine.

Belongs to the dynactin subunit 4 family. As to quaternary structure, subunit of dynactin, a multiprotein complex part of a tripartite complex with dynein and a adapter, such as BICDL1, BICD2 or HOOK3. The dynactin complex is built around ACTR1A/ACTB filament and consists of an actin-related filament composed of a shoulder domain, a pointed end and a barbed end. Its length is defined by its flexible shoulder domain. The soulder is composed of 2 DCTN1 subunits, 4 DCTN2 and 2 DCTN3. The 4 DCNT2 (via N-terminus) bind the ACTR1A filament and act as molecular rulers to determine the length. The pointed end is important for binding dynein-dynactin cargo adapters. Consists of 4 subunits: ACTR10, DCNT4, DCTN5 and DCTN6. The barbed end is composed of a CAPZA1:CAPZB heterodimers, which binds ACTR1A/ACTB filament and dynactin and stabilizes dynactin. Interacts with ATP7B, but not ATP7A, in a copper-dependent manner. Interacts with ANK2; this interaction is required for localization at costameres. Interacts with N4BP2L1.

Its subcellular location is the cytoplasm. It localises to the cytoskeleton. The protein localises to the microtubule organizing center. It is found in the centrosome. The protein resides in the stress fiber. Its subcellular location is the cell cortex. It localises to the myofibril. The protein localises to the sarcomere. Functionally, part of the dynactin complex that activates the molecular motor dynein for ultra-processive transport along microtubules. The chain is Dynactin subunit 4 (DCTN4) from Pongo abelii (Sumatran orangutan).